Here is a 231-residue protein sequence, read N- to C-terminus: uncharacterized protein (231 aa).

10–34 (VVTGAGSGIGEAIATLLHEEGAKVV) contacts NADP(+). Residue Ser140 coordinates substrate. Tyr153 serves as the catalytic Proton acceptor.

The protein belongs to the short-chain dehydrogenases/reductases (SDR) family.

This is an uncharacterized protein from Staphylococcus aureus (strain MRSA252).